Here is a 141-residue protein sequence, read N- to C-terminus: Arsenate reductase (141 aa).

Cysteine 12 functions as the Nucleophile; cysteine thioarsenate intermediate in the catalytic mechanism.

The protein belongs to the ArsC family.

It carries out the reaction [glutaredoxin]-dithiol + arsenate + glutathione + H(+) = glutathionyl-S-S-[glutaredoxin] + arsenite + H2O. In terms of biological role, involved in resistance to arsenate. Catalyzes the reduction of arsenate [As(V)] to arsenite [As(III)]. This is Arsenate reductase from Escherichia coli (strain K12).